The chain runs to 688 residues: MTKELFLEIGTEEIPAGFLPKAMAEMEGLIRKELDNARIAFGEVKAMATPRRLALVVSQVAGQQADAEITAMGPAKKVAFNEDGTPTRAGEGFARGQGVEPSALSIVVTEKGEYVAVTKKETGVPTVGLLGEILPRLINNISFKKSMRWGDLDVRFARPVHWIVALFDGIVVPFSFGNIESGTMSRGHRFMANTSFPVRDFTHYLDECERHFVIPDPAKRKEIIRREIHRVAKAAGGRLLPDEGLLEQVTYLVEYPSAVHGTFSAEFLVVPREVLITSMREHQRYFSLVDDNGKLLPGFITINNTLTEDPSVVVKGNERVLRARLSDARFFFDEDKKVPLENRVESLKSVLYQAKLGTSYEKMERFRALAEGVAEELQPGLKEKVSQAATLCKADLVTGMVGEFPEVQGIMGREYAFLQGIDPGVANAIAEHYLPTQAGGELPASDIGAFVSIADKLDTICGCFSVGLIPTGSADPYALRRAALGIINIIVAKGYALQLTTLVSKALARLEGKLTRKKEEVFGDVMDFFQGRFVNLMTDRFPADVVDAVVAVSFDDLVDTAAKIEALAVFKKRPDFEPLAVAFKRVCNIVKGPVVVVGVNELDFEEDAEGTLHRAYHSVAGTVAAKVAERDYLAALTQIATLKGAVDDFFDNVMVMAEDERVRNNRLALLQEIKGLFRDIADFAKITA.

This sequence belongs to the class-II aminoacyl-tRNA synthetase family. In terms of assembly, tetramer of two alpha and two beta subunits.

It is found in the cytoplasm. The enzyme catalyses tRNA(Gly) + glycine + ATP = glycyl-tRNA(Gly) + AMP + diphosphate. The sequence is that of Glycine--tRNA ligase beta subunit from Geotalea uraniireducens (strain Rf4) (Geobacter uraniireducens).